The chain runs to 233 residues: Octanoyltransferase (233 aa).

A BPL/LPL catalytic domain is found at 36–211 (DTTPDEIWLV…EFTRQLGYPT (176 aa)). Residues 75-82 (RGGQVTYH), 142-144 (SLG), and 155-157 (GLA) contribute to the substrate site. Cysteine 173 serves as the catalytic Acyl-thioester intermediate.

It belongs to the LipB family.

Its subcellular location is the cytoplasm. The catalysed reaction is octanoyl-[ACP] + L-lysyl-[protein] = N(6)-octanoyl-L-lysyl-[protein] + holo-[ACP] + H(+). It functions in the pathway protein modification; protein lipoylation via endogenous pathway; protein N(6)-(lipoyl)lysine from octanoyl-[acyl-carrier-protein]: step 1/2. Its function is as follows. Catalyzes the transfer of endogenously produced octanoic acid from octanoyl-acyl-carrier-protein onto the lipoyl domains of lipoate-dependent enzymes. Lipoyl-ACP can also act as a substrate although octanoyl-ACP is likely to be the physiological substrate. In Yersinia pseudotuberculosis serotype O:3 (strain YPIII), this protein is Octanoyltransferase.